The chain runs to 360 residues: Phospho-N-acetylmuramoyl-pentapeptide-transferase (360 aa).

10 helical membrane-spanning segments follow: residues 21 to 41 (YVTF…LWWG), 74 to 94 (MGGL…GDLG), 97 to 117 (YVWV…IDDY), 135 to 155 (LLQS…ADTA), 168 to 188 (VMPQ…VGSS), 199 to 219 (GLAI…AYLS), 236 to 256 (AGEL…FLWF), 263 to 283 (VFMG…IAVL), 288 to 308 (ILLV…ILQV), and 338 to 358 (VIVR…ATLK).

It belongs to the glycosyltransferase 4 family. MraY subfamily. Mg(2+) is required as a cofactor.

It is found in the cell inner membrane. It catalyses the reaction UDP-N-acetyl-alpha-D-muramoyl-L-alanyl-gamma-D-glutamyl-meso-2,6-diaminopimeloyl-D-alanyl-D-alanine + di-trans,octa-cis-undecaprenyl phosphate = di-trans,octa-cis-undecaprenyl diphospho-N-acetyl-alpha-D-muramoyl-L-alanyl-D-glutamyl-meso-2,6-diaminopimeloyl-D-alanyl-D-alanine + UMP. It participates in cell wall biogenesis; peptidoglycan biosynthesis. Functionally, catalyzes the initial step of the lipid cycle reactions in the biosynthesis of the cell wall peptidoglycan: transfers peptidoglycan precursor phospho-MurNAc-pentapeptide from UDP-MurNAc-pentapeptide onto the lipid carrier undecaprenyl phosphate, yielding undecaprenyl-pyrophosphoryl-MurNAc-pentapeptide, known as lipid I. The chain is Phospho-N-acetylmuramoyl-pentapeptide-transferase from Shewanella piezotolerans (strain WP3 / JCM 13877).